The following is a 393-amino-acid chain: Acetate kinase (393 aa).

N7 contacts Mg(2+). K14 contacts ATP. R87 lines the substrate pocket. Residue D144 is the Proton donor/acceptor of the active site. ATP is bound by residues 202-206 (HIGNG), 277-279 (DLR), and 326-330 (GVGEN). Position 380 (E380) interacts with Mg(2+).

It belongs to the acetokinase family. In terms of assembly, homodimer. Mg(2+) is required as a cofactor. The cofactor is Mn(2+).

It is found in the cytoplasm. The catalysed reaction is acetate + ATP = acetyl phosphate + ADP. The protein operates within metabolic intermediate biosynthesis; acetyl-CoA biosynthesis; acetyl-CoA from acetate: step 1/2. In terms of biological role, catalyzes the formation of acetyl phosphate from acetate and ATP. Can also catalyze the reverse reaction. This Mycoplasmopsis pulmonis (strain UAB CTIP) (Mycoplasma pulmonis) protein is Acetate kinase.